A 209-amino-acid chain; its full sequence is MEGGGGSGNKTTGGLAGFFGAGGAGYSHADLAGVPLTGMNPLSPYLNVDPRYLVQDTDEFILPTGANKTRGRFELAFFTIGGCCMTVAAFGAMNGLRLGLKETQNMAWSKPRNVQILNMVTRQGALWANTLGSLALLYSAFGVIIEKTRGAEDDLNTVAAGTMTGMLYKCTGGLRGIARGGLTGLTLTSLYALYNNWEHMKGSLLQQSL.

Transmembrane regions (helical) follow at residues 73–93 (FELA…FGAM), 125–145 (ALWA…GVII), and 172–194 (GGLR…YALY).

The protein belongs to the Tim17/Tim22/Tim23 family. As to quaternary structure, component of the TIM23 complex at least composed of TIMM23, TIMM17 (TIMM17A or TIMM17B) and TIMM50; within this complex, directly interacts with TIMM50. The complex interacts with the TIMM44 component of the PAM complex and with DNAJC15. Upon mitochondrial depolarization, interacts with PINK1; the interaction is required for PINK1 accumulation at the outer mitochondrial membrane, kinase activation by autophosphorylation and PRKN recruitement to mitochondria.

It is found in the mitochondrion inner membrane. Its function is as follows. Essential component of the TIM23 complex, a complex that mediates the translocation of transit peptide-containing proteins across the mitochondrial inner membrane. Has a role in the activation of stress-induced mitophagy by protecting PINK1 from OMA1-mediated degradation and facilitating its accumulation at the outer mitochondrial membrane in response to depolarization. The chain is Mitochondrial import inner membrane translocase subunit Tim23 (TIMM23) from Pongo abelii (Sumatran orangutan).